A 407-amino-acid polypeptide reads, in one-letter code: Argininosuccinate synthase (407 aa).

Residues 11–19 and alanine 38 contribute to the ATP site; that span reads AYSGGLDTS. 2 residues coordinate L-citrulline: tyrosine 89 and serine 94. An ATP-binding site is contributed by glycine 119. Residues threonine 121, asparagine 125, and aspartate 126 each coordinate L-aspartate. Residue asparagine 125 coordinates L-citrulline. L-citrulline is bound by residues arginine 129, serine 180, serine 189, glutamate 265, and tyrosine 277.

It belongs to the argininosuccinate synthase family. Type 1 subfamily. In terms of assembly, homotetramer.

The protein resides in the cytoplasm. It catalyses the reaction L-citrulline + L-aspartate + ATP = 2-(N(omega)-L-arginino)succinate + AMP + diphosphate + H(+). Its pathway is amino-acid biosynthesis; L-arginine biosynthesis; L-arginine from L-ornithine and carbamoyl phosphate: step 2/3. This is Argininosuccinate synthase from Magnetococcus marinus (strain ATCC BAA-1437 / JCM 17883 / MC-1).